Reading from the N-terminus, the 301-residue chain is Putative S-adenosyl-L-methionine-dependent methyltransferase MT0851 (301 aa).

S-adenosyl-L-methionine is bound by residues Asp127 and 156–157 (DL).

This sequence belongs to the UPF0677 family.

Functionally, exhibits S-adenosyl-L-methionine-dependent methyltransferase activity. This is Putative S-adenosyl-L-methionine-dependent methyltransferase MT0851 from Mycobacterium tuberculosis (strain CDC 1551 / Oshkosh).